Reading from the N-terminus, the 103-residue chain is UPF0145 protein BCE33L0904 (103 aa).

It belongs to the UPF0145 family.

This Bacillus cereus (strain ZK / E33L) protein is UPF0145 protein BCE33L0904.